Consider the following 1064-residue polypeptide: Error-prone DNA polymerase (1064 aa).

It belongs to the DNA polymerase type-C family. DnaE2 subfamily.

Its subcellular location is the cytoplasm. The catalysed reaction is DNA(n) + a 2'-deoxyribonucleoside 5'-triphosphate = DNA(n+1) + diphosphate. Its function is as follows. DNA polymerase involved in damage-induced mutagenesis and translesion synthesis (TLS). It is not the major replicative DNA polymerase. This Azoarcus sp. (strain BH72) protein is Error-prone DNA polymerase.